The following is a 427-amino-acid chain: Glutamate-1-semialdehyde 2,1-aminomutase (427 aa).

Lysine 265 carries the post-translational modification N6-(pyridoxal phosphate)lysine.

This sequence belongs to the class-III pyridoxal-phosphate-dependent aminotransferase family. HemL subfamily. As to quaternary structure, homodimer. Pyridoxal 5'-phosphate serves as cofactor.

Its subcellular location is the cytoplasm. It catalyses the reaction (S)-4-amino-5-oxopentanoate = 5-aminolevulinate. It functions in the pathway porphyrin-containing compound metabolism; protoporphyrin-IX biosynthesis; 5-aminolevulinate from L-glutamyl-tRNA(Glu): step 2/2. This is Glutamate-1-semialdehyde 2,1-aminomutase from Paraburkholderia phytofirmans (strain DSM 17436 / LMG 22146 / PsJN) (Burkholderia phytofirmans).